A 288-amino-acid chain; its full sequence is 33 kDa chaperonin (288 aa).

Disulfide bonds link Cys235/Cys237 and Cys268/Cys271.

It belongs to the HSP33 family. Post-translationally, under oxidizing conditions two disulfide bonds are formed involving the reactive cysteines. Under reducing conditions zinc is bound to the reactive cysteines and the protein is inactive.

The protein resides in the cytoplasm. In terms of biological role, redox regulated molecular chaperone. Protects both thermally unfolding and oxidatively damaged proteins from irreversible aggregation. Plays an important role in the bacterial defense system toward oxidative stress. This chain is 33 kDa chaperonin, found in Streptococcus thermophilus (strain CNRZ 1066).